Consider the following 575-residue polypeptide: MKPIFDINETFEKQLKDLTSNVKSIQDNLLEEIITPNTKTEYLQRFLIDRFDKELFKKNVPIVSYEDIKPYLDRVVNGESSDVISARTITGFLLSSGTSGGAQKMMPWNNKYLDNLTFIYDLRMQVITKHVKGVEEGKGMMFLFTKQESMTPSGLPARVATSSYFKSDYFKNRPSNWYYSYTSPDEVILCPNNTESLYCHLLCGLVQRDEVVRTGSIFASVMVRAIEVLKNSWEELCSNIRSGHLSNWVTDLGCQNSVSLVLGGPRPELADTIEEICNQNSWKGIVKRLWPNTKYIETVVTGSMGQYVPMLNYYCNDLPLVSTTYGSSETTFGINLDPLCKPEDVSYTFMPNMSYFEFIPMDGGDKNDVVDLEDVKLGCTYEPVVTNFAGLYRMRVGDIVLVTGFYNNAPQFKFVRRENVVLSIDSDKTNEEDLFKAVSQAKLVLESSGLDLKDFTSYADTSTFPGHYVVYLEVDTKEGEEKETAQFELDEEALSTCCLVMEESLDNVYKRCRFKDGSIGPLEIRVVRQGTFDSLMDFFISQGASTGQYKTPRCIKSGKALQVLETCVVAKFFSI.

A coiled-coil region spans residues 6–33; the sequence is DINETFEKQLKDLTSNVKSIQDNLLEEI. 95–96 is a binding site for AMP; the sequence is SS. Position 120–123 (120–123) interacts with salicylate; it reads YDLR. T301, T324, S328, Y347, D398, and R417 together coordinate AMP.

The protein belongs to the IAA-amido conjugating enzyme family. Interacts with the P.syringae pv. maculicola effector HopW1-1 (via C-terminus). As to expression, expressed in seedlings, mostly in cotyledons, leaves, hypocotyls and sporadically in roots. Not detected in unchallenged adult plants, except in flowers.

Specifically and reversibly inhibited by salicylic acid (SA). Functionally, catalyzes the conjugation of specific amino acids (e.g. Glu and possibly His, Lys, and Met) to their preferred acyl substrates (e.g. 4-substituted benzoates), in a magnesium ion- and ATP-dependent manner. Can use 4-substituted benzoates such as 4-aminobenzoate (pABA), 4-fluorobenzoate and 4-hydroxybenzoate (4-HBA), and, to a lesser extent, benzoate, vanillate and trans-cinnamate, but not 2-substituted benzoates and salicylic acid (SA), as conjugating acyl substrates. Involved in both basal and induced resistance in a SA-dependent manner. Confers resistance to virulent and avirulent pathogens (at least bacteria and oomycetes), and promotes SA glucosides accumulation. Required for the establishment of hyper-sensitive response (HR) upon incompatible interaction and subsequent systemic acquired resistance (SAR). This chain is 4-substituted benzoates-glutamate ligase GH3.12 (GH3.12), found in Arabidopsis thaliana (Mouse-ear cress).